The chain runs to 1054 residues: Disks large-associated protein 2 (1054 aa).

2 disordered regions span residues 32-87 and 242-301; these read EPEE…SGSR and SHSL…SDDN. Residues 242 to 255 show a composition bias toward polar residues; sequence SHSLEGSSKSNANG. The span at 267–281 shows a compositional bias: basic residues; it reads HAHHAKHSKRSKSKE. The segment covering 289–299 has biased composition (low complexity); sequence RPGMSSWWSSD. Phosphoserine is present on residues Ser298, Ser304, Ser386, and Ser452. 2 disordered regions span residues 442–464 and 609–666; these read GDEE…ILPE and YKKT…TDSL. Over residues 628-641 the composition is skewed to polar residues; sequence VTAQSSTESTQDAY. Phosphoserine is present on residues Ser662, Ser665, Ser668, and Ser715. The tract at residues 719-746 is disordered; it reads QDSEFPEHQPYPRSDVETATDSDTESRG. Thr738 carries the post-translational modification Phosphothreonine. Residues Ser740, Ser771, Ser806, Ser978, and Ser1007 each carry the phosphoserine modification. Basic and acidic residues-rich tracts occupy residues 977–987 and 1002–1020; these read ESPERKEERKV and ITRE…EARR. Residues 977–1021 form a disordered region; sequence ESPERKEERKVPPPIPKKPPKGKFPITREKSLDLPDRQRQEARRR.

It belongs to the SAPAP family. In terms of assembly, interacts with DLG1 and DLG4/PSD-95. In terms of tissue distribution, expressed in brain and kidney.

Its subcellular location is the cell membrane. The protein resides in the postsynaptic density. It localises to the synapse. May play a role in the molecular organization of synapses and neuronal cell signaling. Could be an adapter protein linking ion channel to the subsynaptic cytoskeleton. May induce enrichment of PSD-95/SAP90 at the plasma membrane. The polypeptide is Disks large-associated protein 2 (Homo sapiens (Human)).